An 86-amino-acid chain; its full sequence is Translation initiation factor IF-1 (86 aa).

An S1-like domain is found at 1–72 (MPKDDVIKME…TKGRIVYRKK (72 aa)).

Belongs to the IF-1 family. In terms of assembly, component of the 30S ribosomal translation pre-initiation complex which assembles on the 30S ribosome in the order IF-2 and IF-3, IF-1 and N-formylmethionyl-tRNA(fMet); mRNA recruitment can occur at any time during PIC assembly.

Its subcellular location is the cytoplasm. Its function is as follows. One of the essential components for the initiation of protein synthesis. Stabilizes the binding of IF-2 and IF-3 on the 30S subunit to which N-formylmethionyl-tRNA(fMet) subsequently binds. Helps modulate mRNA selection, yielding the 30S pre-initiation complex (PIC). Upon addition of the 50S ribosomal subunit IF-1, IF-2 and IF-3 are released leaving the mature 70S translation initiation complex. This Pseudothermotoga lettingae (strain ATCC BAA-301 / DSM 14385 / NBRC 107922 / TMO) (Thermotoga lettingae) protein is Translation initiation factor IF-1.